The primary structure comprises 78 residues: MEGDIAQMGQFIGAGLAAIGSGAAAIGVGHVAGNFLAGALRNPSAAAGQTATLFIGIAFAEALGIFAFLVALLLMFAV.

The next 2 membrane-spanning stretches (helical) occupy residues 11-31 and 53-73; these read FIGA…VGHV and LFIG…VALL.

It belongs to the ATPase C chain family. F-type ATPases have 2 components, F(1) - the catalytic core - and F(0) - the membrane proton channel. F(1) has five subunits: alpha(3), beta(3), gamma(1), delta(1), epsilon(1). F(0) has four main subunits: a(1), b(1), b'(1) and c(10-14). The alpha and beta chains form an alternating ring which encloses part of the gamma chain. F(1) is attached to F(0) by a central stalk formed by the gamma and epsilon chains, while a peripheral stalk is formed by the delta, b and b' chains.

The protein localises to the cell inner membrane. Its function is as follows. F(1)F(0) ATP synthase produces ATP from ADP in the presence of a proton or sodium gradient. F-type ATPases consist of two structural domains, F(1) containing the extramembraneous catalytic core and F(0) containing the membrane proton channel, linked together by a central stalk and a peripheral stalk. During catalysis, ATP synthesis in the catalytic domain of F(1) is coupled via a rotary mechanism of the central stalk subunits to proton translocation. Functionally, key component of the F(0) channel; it plays a direct role in translocation across the membrane. A homomeric c-ring of between 10-14 subunits forms the central stalk rotor element with the F(1) delta and epsilon subunits. The polypeptide is ATP synthase subunit c (Jannaschia sp. (strain CCS1)).